Consider the following 694-residue polypeptide: Cyclic nucleotide-gated channel beta-3 (694 aa).

At 1–210 (MLKSLTVKFN…SIDSYTDRVY (210 aa)) the chain is on the cytoplasmic side. 2 disordered regions span residues 24-82 (CPNL…DPEC) and 146-177 (ENFP…KEHQ). Polar residues-rich tracts occupy residues 26–40 (NLSS…QGDN) and 153–168 (ASSQ…PKQE). The helical transmembrane segment at 211–234 (LLWLLLVTIAYNWNCWLLPVRLVF) threads the bilayer. Over 235–241 (PCQTPDN) the chain is Extracellular. The chain crosses the membrane as a helical span at residues 242 to 262 (KNYWIITDIVCDIIYLCDILL). The Cytoplasmic portion of the chain corresponds to 263-291 (IQPRLQFVRGGEIIVDSNELKRNYRSSTK). A helical membrane pass occupies residues 292-309 (FRMDVASLLPFEVLYIFF). At 310-312 (GVN) the chain is on the extracellular side. The chain crosses the membrane as a helical span at residues 313–327 (PIFRANRILKYTSFF). The Cytoplasmic portion of the chain corresponds to 328–340 (EFNHHLESIMDKA). The tract at residues 340-439 (AYVYRVIRTT…IGQMRDVIGA (100 aa)) is ion conduction pathway. The chain crosses the membrane as a helical span at residues 341-363 (YVYRVIRTTGYLLFLLHINACVY). Residues 364–385 (YWASDYEGIGSTKWVYNGEGNK) lie on the Extracellular side of the membrane. 2 helical membrane-spanning segments follow: residues 386–412 (YLRC…SFEI) and 413–437 (VFQF…RDVI). Residues 399–402 (TIGG) are selectivity filter. Residues 438 to 694 (GAATANQNYF…KGKRKTTTQK (257 aa)) lie on the Cytoplasmic side of the membrane. The interval 442–518 (ANQNYFQACM…SIIDKVELFK (77 aa)) is C-linker. The segment at 522–638 (TQMIYDLLLR…LLMKKAKILL (117 aa)) is cyclic nucleotide-binding domain. Residues glycine 583, glutamate 584, arginine 596, and threonine 597 each contribute to the 3',5'-cyclic GMP site.

This sequence belongs to the cyclic nucleotide-gated cation channel (TC 1.A.1.5) family. CNGB3 subfamily. Forms heterotetrameric channels composed of CNGA3 and CNGB3 subunits with 3:1 stoichiometry. In terms of tissue distribution, small subset of retinal photoreceptor cells and testis.

It localises to the cell membrane. The enzyme catalyses Ca(2+)(in) = Ca(2+)(out). It catalyses the reaction Na(+)(in) = Na(+)(out). The catalysed reaction is K(+)(in) = K(+)(out). It carries out the reaction NH4(+)(in) = NH4(+)(out). The enzyme catalyses Rb(+)(in) = Rb(+)(out). It catalyses the reaction Li(+)(in) = Li(+)(out). The catalysed reaction is Cs(+)(in) = Cs(+)(out). Functionally, pore-forming subunit of the cone cyclic nucleotide-gated channel. Mediates cone photoresponses at bright light converting transient changes in intracellular cGMP levels into electrical signals. In the dark, cGMP levels are high and keep the channel open enabling a steady inward current carried by Na(+) and Ca(2+) ions that leads to membrane depolarization and neurotransmitter release from synaptic terminals. Upon photon absorption cGMP levels decline leading to channel closure and membrane hyperpolarization that ultimately slows neurotransmitter release and signals the presence of light, the end point of the phototransduction cascade. Conducts cGMP- and cAMP-gated ion currents, with permeability for monovalent and divalent cations. The polypeptide is Cyclic nucleotide-gated channel beta-3 (Mus musculus (Mouse)).